We begin with the raw amino-acid sequence, 237 residues long: DNA repair protein RecO (237 aa).

This sequence belongs to the RecO family.

Involved in DNA repair and RecF pathway recombination. The chain is DNA repair protein RecO from Rickettsia rickettsii (strain Iowa).